Here is a 201-residue protein sequence, read N- to C-terminus: Ciliary microtubule inner protein 2C (201 aa).

This sequence belongs to the CIMIP2 family. Microtubule inner protein component of sperm flagellar doublet microtubules. Expressed in airway epithelial cells.

Its subcellular location is the cytoplasm. It localises to the cytoskeleton. It is found in the cilium axoneme. The protein localises to the flagellum axoneme. Its function is as follows. Microtubule inner protein (MIP) part of the dynein-decorated doublet microtubules (DMTs) in cilia axoneme, which is required for motile cilia beating. Binds to the intra-tubulin interfaces. This chain is Ciliary microtubule inner protein 2C, found in Homo sapiens (Human).